Reading from the N-terminus, the 304-residue chain is UDP-3-O-acyl-N-acetylglucosamine deacetylase (304 aa).

Positions 79, 238, and 242 each coordinate Zn(2+). Catalysis depends on His265, which acts as the Proton donor.

The protein belongs to the LpxC family. Zn(2+) is required as a cofactor.

It catalyses the reaction a UDP-3-O-[(3R)-3-hydroxyacyl]-N-acetyl-alpha-D-glucosamine + H2O = a UDP-3-O-[(3R)-3-hydroxyacyl]-alpha-D-glucosamine + acetate. It participates in glycolipid biosynthesis; lipid IV(A) biosynthesis; lipid IV(A) from (3R)-3-hydroxytetradecanoyl-[acyl-carrier-protein] and UDP-N-acetyl-alpha-D-glucosamine: step 2/6. In terms of biological role, catalyzes the hydrolysis of UDP-3-O-myristoyl-N-acetylglucosamine to form UDP-3-O-myristoylglucosamine and acetate, the committed step in lipid A biosynthesis. The polypeptide is UDP-3-O-acyl-N-acetylglucosamine deacetylase (Pseudoalteromonas atlantica (strain T6c / ATCC BAA-1087)).